Reading from the N-terminus, the 277-residue chain is Formamidopyrimidine-DNA glycosylase (277 aa).

Catalysis depends on P2, which acts as the Schiff-base intermediate with DNA. E3 acts as the Proton donor in catalysis. Catalysis depends on K59, which acts as the Proton donor; for beta-elimination activity. DNA is bound by residues H96, R115, and R158. The segment at W243 to K277 adopts an FPG-type zinc-finger fold. R267 serves as the catalytic Proton donor; for delta-elimination activity.

It belongs to the FPG family. As to quaternary structure, monomer. Zn(2+) serves as cofactor.

The catalysed reaction is Hydrolysis of DNA containing ring-opened 7-methylguanine residues, releasing 2,6-diamino-4-hydroxy-5-(N-methyl)formamidopyrimidine.. It carries out the reaction 2'-deoxyribonucleotide-(2'-deoxyribose 5'-phosphate)-2'-deoxyribonucleotide-DNA = a 3'-end 2'-deoxyribonucleotide-(2,3-dehydro-2,3-deoxyribose 5'-phosphate)-DNA + a 5'-end 5'-phospho-2'-deoxyribonucleoside-DNA + H(+). Functionally, involved in base excision repair of DNA damaged by oxidation or by mutagenic agents. Acts as a DNA glycosylase that recognizes and removes damaged bases. Has a preference for oxidized purines, such as 7,8-dihydro-8-oxoguanine (8-oxoG). Has AP (apurinic/apyrimidinic) lyase activity and introduces nicks in the DNA strand. Cleaves the DNA backbone by beta-delta elimination to generate a single-strand break at the site of the removed base with both 3'- and 5'-phosphates. This is Formamidopyrimidine-DNA glycosylase from Heliobacterium modesticaldum (strain ATCC 51547 / Ice1).